The sequence spans 120 residues: MFLLYEYDIFWAFLLISSAIPVLAFLISGVLSPIRKGPEKLSSYESGIEPIGDAWLQFRIRYYMFALVFVVFDVETVFLYPWAMSFDVLGVSAFIEAFIFVLILILGLVYAWRKGALEWS.

Helical transmembrane passes span 9 to 29 (IFWA…LISG), 64 to 84 (MFAL…PWAM), and 88 to 108 (VLGV…ILGL).

Belongs to the complex I subunit 3 family. As to quaternary structure, NDH is composed of at least 16 different subunits, 5 of which are encoded in the nucleus.

It localises to the plastid. The protein resides in the chloroplast thylakoid membrane. It carries out the reaction a plastoquinone + NADH + (n+1) H(+)(in) = a plastoquinol + NAD(+) + n H(+)(out). The enzyme catalyses a plastoquinone + NADPH + (n+1) H(+)(in) = a plastoquinol + NADP(+) + n H(+)(out). In terms of biological role, NDH shuttles electrons from NAD(P)H:plastoquinone, via FMN and iron-sulfur (Fe-S) centers, to quinones in the photosynthetic chain and possibly in a chloroplast respiratory chain. The immediate electron acceptor for the enzyme in this species is believed to be plastoquinone. Couples the redox reaction to proton translocation, and thus conserves the redox energy in a proton gradient. In Arabidopsis thaliana (Mouse-ear cress), this protein is NAD(P)H-quinone oxidoreductase subunit 3, chloroplastic.